The chain runs to 462 residues: Argininosuccinate lyase (462 aa).

This sequence belongs to the lyase 1 family. Argininosuccinate lyase subfamily.

Its subcellular location is the cytoplasm. It catalyses the reaction 2-(N(omega)-L-arginino)succinate = fumarate + L-arginine. Its pathway is amino-acid biosynthesis; L-arginine biosynthesis; L-arginine from L-ornithine and carbamoyl phosphate: step 3/3. This chain is Argininosuccinate lyase, found in Bacillus mycoides (strain KBAB4) (Bacillus weihenstephanensis).